An 85-amino-acid chain; its full sequence is MNYLIVISFALLLMTGVESGRDAYIAKKENCTYFCALNPYCNDLCTKNGAKSGYCQWAGRYGNACWCIDLPDKVPIRIPGPCIGR.

Residues 1-19 (MNYLIVISFALLLMTGVES) form the signal peptide. Residues 21-83 (RDAYIAKKEN…VPIRIPGPCI (63 aa)) enclose the LCN-type CS-alpha/beta domain. 4 disulfide bridges follow: cysteine 31–cysteine 82, cysteine 35–cysteine 55, cysteine 41–cysteine 65, and cysteine 45–cysteine 67.

It belongs to the long (4 C-C) scorpion toxin superfamily. Sodium channel inhibitor family. Alpha subfamily. Expressed by the venom gland.

Its subcellular location is the secreted. Functionally, this protein markedly relaxes the rat carbachol-precontracted anococcygeus muscle. This relaxation is inhibited by the inhibitor of nitric oxide (NO) synthase, N-nitro-L-arginine methyl ester (L-NAME), suggesting that the response induced by this protein is NO-mediated. In Olivierus martensii (Manchurian scorpion), this protein is Makatoxin-3.